The following is a 730-amino-acid chain: Probable palmitoyltransferase AKR2 (730 aa).

ANK repeat units lie at residues 32–62 (FVVE…DINK), 66–95 (DELP…NVNQ), 100–129 (ERAT…NPTL), 133–166 (QGLN…NVDI), 172–201 (NNRT…TVAL), and 205–234 (RGFN…NFYE). The next 4 membrane-spanning stretches (helical) occupy residues 283 to 303 (LMIF…SLIL), 309 to 328 (IALS…KFVL), 344 to 364 (TPFF…IWVK), and 376 to 396 (AKDA…LKLV). The DHHC domain occupies 429–479 (NFCVETLERKPLRSKYSLFSGALVARFNHYCPWVYNDIGLKNHKLFMFFAF). C459 functions as the S-palmitoyl cysteine intermediate in the catalytic mechanism. Transmembrane regions (helical) follow at residues 473-493 (LFMF…WLCL) and 530-550 (TFFL…MLIV).

This sequence belongs to the DHHC palmitoyltransferase family. AKR/ZDHHC17 subfamily.

Its subcellular location is the membrane. It carries out the reaction L-cysteinyl-[protein] + hexadecanoyl-CoA = S-hexadecanoyl-L-cysteinyl-[protein] + CoA. The protein is Probable palmitoyltransferase AKR2 (AKR2) of Saccharomyces uvarum (strain ATCC 76518 / CBS 7001 / CLIB 283 / NBRC 10550 / MCYC 623 / NCYC 2669 / NRRL Y-11845) (Yeast).